Consider the following 304-residue polypeptide: 1D-myo-inositol 2-acetamido-2-deoxy-alpha-D-glucopyranoside deacetylase 2 (304 aa).

The Zn(2+) site is built by histidine 17, aspartate 20, and histidine 152.

Belongs to the MshB deacetylase family. Zn(2+) serves as cofactor.

The catalysed reaction is 1D-myo-inositol 2-acetamido-2-deoxy-alpha-D-glucopyranoside + H2O = 1D-myo-inositol 2-amino-2-deoxy-alpha-D-glucopyranoside + acetate. In terms of biological role, catalyzes the deacetylation of 1D-myo-inositol 2-acetamido-2-deoxy-alpha-D-glucopyranoside (GlcNAc-Ins) in the mycothiol biosynthesis pathway. The chain is 1D-myo-inositol 2-acetamido-2-deoxy-alpha-D-glucopyranoside deacetylase 2 from Catenulispora acidiphila (strain DSM 44928 / JCM 14897 / NBRC 102108 / NRRL B-24433 / ID139908).